A 261-amino-acid chain; its full sequence is MVNLPDNVHEESFANNNASLISRLENSAFNKSNFEYLKTCINFFEKKSVNYTVVALPCSGDERKASKRPKRVNNHNMYILFNSFYTKIRRPEWPNSPTMWDTVKAHKELSDFVRVFDHTQKLGKSITSRSASSSSFTETNGKRRRSVITNVAEVQENCDQRDKLYSEFYSLLNETFKTGVAPATSNIYDSVITRELLTKNMELFKNIALKLPSPSYVPTPVSNKKRRAPPSAPKKIAKQRRDTKPPPTYVSDNTQDTNMSE.

Residues 215–261 (SYVPTPVSNKKRRAPPSAPKKIAKQRRDTKPPPTYVSDNTQDTNMSE) form a disordered region. The span at 250–261 (VSDNTQDTNMSE) shows a compositional bias: polar residues.

In Orgyia pseudotsugata multicapsid polyhedrosis virus (OpMNPV), this protein is Early 39 kDa protein.